The sequence spans 356 residues: 7,8-didemethyl-8-hydroxy-5-deazariboflavin synthase (356 aa).

The 241-residue stretch at 40-280 (ITYSKNVFIP…KDISIQVPPN (241 aa)) folds into the Radical SAM core domain. The [4Fe-4S] cluster site is built by Cys-54, Cys-58, and Cys-61.

It belongs to the radical SAM superfamily. CofG family. As to quaternary structure, consists of two subunits, CofG and CofH. [4Fe-4S] cluster is required as a cofactor.

The enzyme catalyses 5-amino-5-(4-hydroxybenzyl)-6-(D-ribitylimino)-5,6-dihydrouracil + S-adenosyl-L-methionine = 7,8-didemethyl-8-hydroxy-5-deazariboflavin + 5'-deoxyadenosine + L-methionine + NH4(+) + H(+). The protein operates within cofactor biosynthesis; coenzyme F0 biosynthesis. Its function is as follows. Catalyzes the radical-mediated synthesis of 7,8-didemethyl-8-hydroxy-5-deazariboflavin from 5-amino-5-(4-hydroxybenzyl)-6-(D-ribitylimino)-5,6-dihydrouracil. This Methanococcus aeolicus (strain ATCC BAA-1280 / DSM 17508 / OCM 812 / Nankai-3) protein is 7,8-didemethyl-8-hydroxy-5-deazariboflavin synthase.